The chain runs to 476 residues: Major facilitator superfamily domain-containing protein 12 (476 aa).

Methionine 1 carries the post-translational modification N-acetylmethionine. Topologically, residues 1-25 are cytoplasmic; sequence MSPPSDDAGPGPPRTLSLAARLSFA. A helical membrane pass occupies residues 26–46; it reads VGHFLNDLCAGMWFTYLLLFL. At 47–55 the chain is on the lumenal side; sequence HSVRGYSSR. A helical membrane pass occupies residues 56–76; sequence GAGLLLLLGQVADGLCTPLVG. Topologically, residues 77–94 are cytoplasmic; the sequence is YEADRASCVRCGPRKAWH. A helical membrane pass occupies residues 95–115; the sequence is LAGTVCVLLSFPFIFSPCLGC. Residues 116-121 lie on the Lumenal side of the membrane; the sequence is GEATPE. Residues 122-142 form a helical membrane-spanning segment; sequence WAALLYYGPFIVVFQFGWAAT. The Cytoplasmic portion of the chain corresponds to 143-167; the sequence is QIAHLSLIPELVTSDHEKVELTALR. The chain crosses the membrane as a helical span at residues 168–188; that stretch reads YAFTVVANITVYGAAWLLLHL. The Lumenal portion of the chain corresponds to 189 to 213; sequence QGSAHGEQDISVGDQLGVQDVPVFR. A helical membrane pass occupies residues 214-234; sequence NLALLVVGVGAIFSLLFHLGT. Residues 235–284 are Cytoplasmic-facing; that stretch reads KEGHRSQHWGNEPNEHTPLVAPAAQPLLLWKHWLREPAFYQVGMLYMTTR. Phosphothreonine is present on threonine 251. The helical transmembrane segment at 285–305 threads the bilayer; it reads LIVNLSQTYIAMYLTYSLSLP. A topological domain (lumenal) is located at residue lysine 306. The chain crosses the membrane as a helical span at residues 307 to 327; the sequence is KFIATIPLVMYLSGFFSSFLM. Topologically, residues 328 to 343 are cytoplasmic; it reads KPVNRRIGRNMTYFTG. 2 helical membrane passes run 344-364 and 365-385; these read LLVI…GVAV and YGAA…SLAM. At 386–398 the chain is on the cytoplasmic side; sequence TADLIGPHTHSGA. Residues 399–419 form a helical membrane-spanning segment; the sequence is FVYGAMSFSDKVANGLAVMAV. The Lumenal portion of the chain corresponds to 420 to 444; that stretch reads QSLHPCPSELCCGACISFYHWVMTA. The chain crosses the membrane as a helical span at residues 445 to 465; that stretch reads VTGGVGVAAALALCSLLIWPI. Residues 466 to 476 lie on the Cytoplasmic side of the membrane; sequence RIRNRDPRDRP.

This sequence belongs to the major facilitator superfamily. Post-translationally, phosphorylation at Thr-251 by MTOR via mTORC1 pathway promotes cysteine transport in lysosomes, thereby regulating lysosomal cysteine and cystine storage and redox homeostasis.

Its subcellular location is the melanosome membrane. The protein localises to the lysosome membrane. It carries out the reaction L-cysteine(in) = L-cysteine(out). In terms of biological role, transporter that mediates the import of cysteine into melanosomes, thereby regulating skin/hair pigmentation. In melanosomes, cysteine import is required both for normal levels of cystine, the oxidized dimer of cysteine, and provide cysteine for the production of the cysteinyldopas used in pheomelanin synthesis, thereby regulating skin/hair pigmentation. Also catalyzes import of cysteine into lysosomes in non-pigmented cells, regulating lysosomal cystine and cysteine storage, which is essnetial for redox homeostasis. The sequence is that of Major facilitator superfamily domain-containing protein 12 from Mus musculus (Mouse).